Here is a 585-residue protein sequence, read N- to C-terminus: Potassium-transporting ATPase potassium-binding subunit (585 aa).

Transmembrane regions (helical) follow at residues 23-43, 85-105, 152-172, 194-214, 275-295, 307-327, 345-365, 367-387, 397-417, 444-464, 502-522, and 547-567; these read GVII…ILSF, FINL…VIMF, FVIT…SMAF, IFDL…LAGI, VEFV…GIVF, VVMF…FAGV, AIGI…STGA, NAAL…GLLL, GVLN…LMVG, LLVV…SSFV, LDGV…LIIA, and VLLI…IIVL.

Belongs to the KdpA family. The system is composed of three essential subunits: KdpA, KdpB and KdpC.

The protein localises to the cell membrane. In terms of biological role, part of the high-affinity ATP-driven potassium transport (or Kdp) system, which catalyzes the hydrolysis of ATP coupled with the electrogenic transport of potassium into the cytoplasm. This subunit binds the extracellular potassium ions and delivers the ions to the membrane domain of KdpB through an intramembrane tunnel. This chain is Potassium-transporting ATPase potassium-binding subunit, found in Thermoplasma acidophilum (strain ATCC 25905 / DSM 1728 / JCM 9062 / NBRC 15155 / AMRC-C165).